The following is a 104-amino-acid chain: Large ribosomal subunit protein bL21 (104 aa).

It belongs to the bacterial ribosomal protein bL21 family. Part of the 50S ribosomal subunit. Contacts protein L20.

In terms of biological role, this protein binds to 23S rRNA in the presence of protein L20. The sequence is that of Large ribosomal subunit protein bL21 from Helicobacter pylori (strain J99 / ATCC 700824) (Campylobacter pylori J99).